The following is a 244-amino-acid chain: 3-oxoacyl-[acyl-carrier-protein] reductase FabG (244 aa).

NADP(+)-binding positions include 12-15 (GASR) and Thr-37. Gly-50 and Gly-53 together coordinate Ca(2+). Residues 59-60 (NV) and Asn-86 contribute to the NADP(+) site. Ser-138 serves as a coordination point for substrate. Residue Asn-145 participates in Ca(2+) binding. Residue Tyr-151 is the Proton acceptor of the active site. NADP(+)-binding positions include 151-155 (YAAAK) and Ile-184. Glu-233 and Thr-234 together coordinate Ca(2+).

It belongs to the short-chain dehydrogenases/reductases (SDR) family. As to quaternary structure, homotetramer.

It catalyses the reaction a (3R)-hydroxyacyl-[ACP] + NADP(+) = a 3-oxoacyl-[ACP] + NADPH + H(+). The enzyme catalyses 3-oxobutanoyl-[ACP] + NADPH + H(+) = (3R)-hydroxybutanoyl-[ACP] + NADP(+). The catalysed reaction is 3-oxopentanoyl-[ACP] + NADPH + H(+) = (3R)-hydroxypentanoyl-[ACP] + NADP(+). It carries out the reaction 3-oxohexanoyl-[ACP] + NADPH + H(+) = (3R)-hydroxyhexanoyl-[ACP] + NADP(+). It catalyses the reaction 3-oxoheptanoyl-[ACP] + NADPH + H(+) = (3R)-hydroxyheptanoyl-[ACP] + NADP(+). The enzyme catalyses 3-oxooctanoyl-[ACP] + NADPH + H(+) = (3R)-hydroxyoctanoyl-[ACP] + NADP(+). The catalysed reaction is 3-oxononanoyl-[ACP] + NADPH + H(+) = (3R)-hydroxynonanoyl-[ACP] + NADP(+). It carries out the reaction 3-oxodecanoyl-[ACP] + NADPH + H(+) = (3R)-hydroxydecanoyl-[ACP] + NADP(+). It catalyses the reaction 3-oxohexadecanoyl-[ACP] + NADPH + H(+) = (3R)-hydroxyhexadecanoyl-[ACP] + NADP(+). The enzyme catalyses 3-oxo-(9Z)-hexadecenoyl-[ACP] + NADPH + H(+) = (3R)-hydroxy-(9Z)-hexadecenoyl-[ACP] + NADP(+). The catalysed reaction is 4-methyl-3-oxopentanoyl-[ACP] + NADPH + H(+) = (3R)-hydroxy-4-methylpentanoyl-[ACP] + NADP(+). It carries out the reaction 5-methyl-3-oxohexanoyl-[ACP] + NADPH + H(+) = (3R)-hydroxy-5-methylhexanoyl-[ACP] + NADP(+). It catalyses the reaction 4-methyl-3-oxohexanoyl-[ACP] + NADPH + H(+) = (3R)-hydroxy-4-methylhexanoyl-[ACP] + NADP(+). Its pathway is lipid metabolism; fatty acid biosynthesis. With respect to regulation, inhibited by cinnamic acid derivatives. Functionally, catalyzes the NADPH-dependent reduction of beta-ketoacyl-ACP substrates to beta-hydroxyacyl-ACP products, the first reductive step in the elongation cycle of fatty acid biosynthesis. This chain is 3-oxoacyl-[acyl-carrier-protein] reductase FabG (fabG), found in Escherichia coli (strain K12).